Reading from the N-terminus, the 357-residue chain is Holliday junction branch migration complex subunit RuvB (357 aa).

Polar residues predominate over residues 1–10; it reads MAIQSDSLSS. The disordered stretch occupies residues 1 to 30; sequence MAIQSDSLSSRPDAPRLVAPAPASPNEESI. The large ATPase domain (RuvB-L) stretch occupies residues 5–195; sequence SDSLSSRPDA…FGIVSRLEFY (191 aa). ATP contacts are provided by residues L34, R35, G76, K79, T80, T81, 142–144, R185, Y195, and R232; that span reads EDF. T80 is a Mg(2+) binding site. Residues 196 to 266 form a small ATPAse domain (RuvB-S) region; the sequence is NTDDLAHIVT…AANQALAMLE (71 aa). Residues 269 to 357 form a head domain (RuvB-H) region; that stretch reads PQGLDLMDRK…QPSSGDLFGA (89 aa). R305, R324, and R329 together coordinate DNA.

The protein belongs to the RuvB family. As to quaternary structure, homohexamer. Forms an RuvA(8)-RuvB(12)-Holliday junction (HJ) complex. HJ DNA is sandwiched between 2 RuvA tetramers; dsDNA enters through RuvA and exits via RuvB. An RuvB hexamer assembles on each DNA strand where it exits the tetramer. Each RuvB hexamer is contacted by two RuvA subunits (via domain III) on 2 adjacent RuvB subunits; this complex drives branch migration. In the full resolvosome a probable DNA-RuvA(4)-RuvB(12)-RuvC(2) complex forms which resolves the HJ.

The protein resides in the cytoplasm. The catalysed reaction is ATP + H2O = ADP + phosphate + H(+). The RuvA-RuvB-RuvC complex processes Holliday junction (HJ) DNA during genetic recombination and DNA repair, while the RuvA-RuvB complex plays an important role in the rescue of blocked DNA replication forks via replication fork reversal (RFR). RuvA specifically binds to HJ cruciform DNA, conferring on it an open structure. The RuvB hexamer acts as an ATP-dependent pump, pulling dsDNA into and through the RuvAB complex. RuvB forms 2 homohexamers on either side of HJ DNA bound by 1 or 2 RuvA tetramers; 4 subunits per hexamer contact DNA at a time. Coordinated motions by a converter formed by DNA-disengaged RuvB subunits stimulates ATP hydrolysis and nucleotide exchange. Immobilization of the converter enables RuvB to convert the ATP-contained energy into a lever motion, pulling 2 nucleotides of DNA out of the RuvA tetramer per ATP hydrolyzed, thus driving DNA branch migration. The RuvB motors rotate together with the DNA substrate, which together with the progressing nucleotide cycle form the mechanistic basis for DNA recombination by continuous HJ branch migration. Branch migration allows RuvC to scan DNA until it finds its consensus sequence, where it cleaves and resolves cruciform DNA. The protein is Holliday junction branch migration complex subunit RuvB of Bordetella avium (strain 197N).